A 147-amino-acid chain; its full sequence is Hemoglobin subunit beta-2 (147 aa).

A Globin domain is found at 3–147 (HWTAEEKATI…LVAALSHGYF (145 aa)). H64 and H93 together coordinate heme b.

Belongs to the globin family. In terms of assembly, heterotetramer of two alpha chains and two beta chains. As to expression, red blood cells.

Functionally, this is a larval (tadpole) beta-globin. The polypeptide is Hemoglobin subunit beta-2 (hbb2) (Xenopus tropicalis (Western clawed frog)).